We begin with the raw amino-acid sequence, 673 residues long: DNA ligase (673 aa).

NAD(+)-binding positions include 33–37 (DHQYD), 83–84 (SL), and Glu117. The active-site N6-AMP-lysine intermediate is the Lys119. The NAD(+) site is built by Arg140, Glu175, Lys282, and Lys306. Positions 400, 403, 418, and 424 each coordinate Zn(2+). The region spanning 592–673 (RGSSAISGKT…WVKMVEDARS (82 aa)) is the BRCT domain.

Belongs to the NAD-dependent DNA ligase family. LigA subfamily. Requires Mg(2+) as cofactor. It depends on Mn(2+) as a cofactor.

It catalyses the reaction NAD(+) + (deoxyribonucleotide)n-3'-hydroxyl + 5'-phospho-(deoxyribonucleotide)m = (deoxyribonucleotide)n+m + AMP + beta-nicotinamide D-nucleotide.. In terms of biological role, DNA ligase that catalyzes the formation of phosphodiester linkages between 5'-phosphoryl and 3'-hydroxyl groups in double-stranded DNA using NAD as a coenzyme and as the energy source for the reaction. It is essential for DNA replication and repair of damaged DNA. The sequence is that of DNA ligase from Anaplasma marginale (strain St. Maries).